A 591-amino-acid chain; its full sequence is tRNA 5-methylaminomethyl-2-thiouridine biosynthesis bifunctional protein MnmC (591 aa).

The tRNA (mnm(5)s(2)U34)-methyltransferase stretch occupies residues Met1 to Pro232. Positions Ile247–Leu591 are FAD-dependent cmnm(5)s(2)U34 oxidoreductase.

The protein in the N-terminal section; belongs to the methyltransferase superfamily. tRNA (mnm(5)s(2)U34)-methyltransferase family. In the C-terminal section; belongs to the DAO family. FAD serves as cofactor.

The protein resides in the cytoplasm. It carries out the reaction 5-aminomethyl-2-thiouridine(34) in tRNA + S-adenosyl-L-methionine = 5-methylaminomethyl-2-thiouridine(34) in tRNA + S-adenosyl-L-homocysteine + H(+). Its function is as follows. Catalyzes the last two steps in the biosynthesis of 5-methylaminomethyl-2-thiouridine (mnm(5)s(2)U) at the wobble position (U34) in tRNA. Catalyzes the FAD-dependent demodification of cmnm(5)s(2)U34 to nm(5)s(2)U34, followed by the transfer of a methyl group from S-adenosyl-L-methionine to nm(5)s(2)U34, to form mnm(5)s(2)U34. This Caulobacter vibrioides (strain ATCC 19089 / CIP 103742 / CB 15) (Caulobacter crescentus) protein is tRNA 5-methylaminomethyl-2-thiouridine biosynthesis bifunctional protein MnmC.